A 240-amino-acid chain; its full sequence is Rho GDP-dissociation inhibitor 1 (240 aa).

A disordered region spans residues 1 to 66 (MSLVSGARDM…DDDSKLQLGP (66 aa)).

This sequence belongs to the Rho GDI family. As to quaternary structure, interacts with RAC-like GTP binding proteins ARAC5/ROP4 and ARAC3/ROP6.

It is found in the cytoplasm. Regulates the GDP/GTP exchange reaction of the Rho proteins by inhibiting the dissociation of GDP from them, and the subsequent binding of GTP to them. The polypeptide is Rho GDP-dissociation inhibitor 1 (GDI1) (Arabidopsis thaliana (Mouse-ear cress)).